A 310-amino-acid chain; its full sequence is tRNA uridine(34) hydroxylase (310 aa).

A Rhodanese domain is found at 134-232 (DDPDTLLIDT…YFEEVSQTES (99 aa)). The active-site Cysteine persulfide intermediate is the Cys-192.

The protein belongs to the TrhO family.

The enzyme catalyses uridine(34) in tRNA + AH2 + O2 = 5-hydroxyuridine(34) in tRNA + A + H2O. Functionally, catalyzes oxygen-dependent 5-hydroxyuridine (ho5U) modification at position 34 in tRNAs. This chain is tRNA uridine(34) hydroxylase, found in Prochlorococcus marinus (strain MIT 9313).